Consider the following 512-residue polypeptide: Maturase K (512 aa).

Belongs to the intron maturase 2 family. MatK subfamily.

It is found in the plastid. Its subcellular location is the chloroplast. Usually encoded in the trnK tRNA gene intron. Probably assists in splicing its own and other chloroplast group II introns. This is Maturase K from Lemna gibba (Swollen duckweed).